A 402-amino-acid chain; its full sequence is 1-deoxy-D-xylulose 5-phosphate reductoisomerase (402 aa).

Residues Thr21, Gly22, Ser23, Ile24, Gly47, Asn50, and Asn127 each coordinate NADPH. Position 128 (Lys128) interacts with 1-deoxy-D-xylulose 5-phosphate. NADPH is bound at residue Glu129. Asp151 provides a ligand contact to Mn(2+). 1-deoxy-D-xylulose 5-phosphate is bound by residues Ser152, Glu153, Ser177, and His200. Glu153 is a Mn(2+) binding site. Position 206 (Gly206) interacts with NADPH. Residues Ser213, Asn218, Lys219, and Glu222 each contribute to the 1-deoxy-D-xylulose 5-phosphate site. Glu222 serves as a coordination point for Mn(2+).

Belongs to the DXR family. Mg(2+) is required as a cofactor. Mn(2+) serves as cofactor.

The enzyme catalyses 2-C-methyl-D-erythritol 4-phosphate + NADP(+) = 1-deoxy-D-xylulose 5-phosphate + NADPH + H(+). Its pathway is isoprenoid biosynthesis; isopentenyl diphosphate biosynthesis via DXP pathway; isopentenyl diphosphate from 1-deoxy-D-xylulose 5-phosphate: step 1/6. Its function is as follows. Catalyzes the NADPH-dependent rearrangement and reduction of 1-deoxy-D-xylulose-5-phosphate (DXP) to 2-C-methyl-D-erythritol 4-phosphate (MEP). This Mycobacterium marinum (strain ATCC BAA-535 / M) protein is 1-deoxy-D-xylulose 5-phosphate reductoisomerase.